Reading from the N-terminus, the 61-residue chain is Small ribosomal subunit protein uS14 (61 aa).

Residues C24, C27, C40, and C43 each coordinate Zn(2+).

Belongs to the universal ribosomal protein uS14 family. Zinc-binding uS14 subfamily. Part of the 30S ribosomal subunit. Contacts proteins S3 and S10. It depends on Zn(2+) as a cofactor.

In terms of biological role, binds 16S rRNA, required for the assembly of 30S particles and may also be responsible for determining the conformation of the 16S rRNA at the A site. The sequence is that of Small ribosomal subunit protein uS14 from Rhodococcus erythropolis (strain PR4 / NBRC 100887).